Here is a 52-residue protein sequence, read N- to C-terminus: Troponin C, skeletal muscle (52 aa).

2 EF-hand domains span residues 2 to 37 (KSEE…SGEH) and 38 to 52 (VTDE…DGDK). The Ca(2+) site is built by aspartate 15, asparagine 17, aspartate 19, tyrosine 21, and glutamate 26.

This sequence belongs to the troponin C family.

Functionally, troponin is the central regulatory protein of striated muscle contraction. Tn consists of three components: Tn-I which is the inhibitor of actomyosin ATPase, Tn-T which contains the binding site for tropomyosin and Tn-C. The binding of calcium to Tn-C abolishes the inhibitory action of Tn on actin filaments. This Protopterus dolloi (Slender lungfish) protein is Troponin C, skeletal muscle.